Reading from the N-terminus, the 149-residue chain is UPF0208 membrane protein VFMJ11_0876 (149 aa).

2 helical membrane passes run 41-61 (FAVK…MVFN) and 69-89 (AIII…WLGN).

The protein belongs to the UPF0208 family.

It localises to the cell inner membrane. The chain is UPF0208 membrane protein VFMJ11_0876 from Aliivibrio fischeri (strain MJ11) (Vibrio fischeri).